The primary structure comprises 98 residues: NADH-ubiquinone oxidoreductase chain 4L (98 aa).

The next 3 membrane-spanning stretches (helical) occupy residues 1-21, 27-47, and 61-81; these read MTLT…GMLT, VASL…ATLI, and IILL…LISI.

The protein belongs to the complex I subunit 4L family. As to quaternary structure, core subunit of respiratory chain NADH dehydrogenase (Complex I) which is composed of 45 different subunits.

Its subcellular location is the mitochondrion inner membrane. The enzyme catalyses a ubiquinone + NADH + 5 H(+)(in) = a ubiquinol + NAD(+) + 4 H(+)(out). Core subunit of the mitochondrial membrane respiratory chain NADH dehydrogenase (Complex I) which catalyzes electron transfer from NADH through the respiratory chain, using ubiquinone as an electron acceptor. Part of the enzyme membrane arm which is embedded in the lipid bilayer and involved in proton translocation. The protein is NADH-ubiquinone oxidoreductase chain 4L (MT-ND4L) of Macaca mulatta (Rhesus macaque).